Reading from the N-terminus, the 394-residue chain is Protein TsgA homolog (394 aa).

A run of 12 helical transmembrane segments spans residues 11-31 (WISFFSYALTGALVIVTGMVM), 51-71 (FLNTGILVSIFLNAWLMEIIP), 76-96 (LVFGFILMILAIAGLMVGHNL), 101-121 (ACMFVLGVVSGITMSIGTFLI), 134-154 (LLFTDSFFSMAGMVFPIIAAT), 160-180 (VAWYWVYACIGVLYLAIFILT), 206-226 (IGVLFLSIAALCYILGQLGFI), 246-266 (GLVSNFWTAYMVGMWFFSVAL), 274-294 (IVTVLAALSTFMMYMFVSSQQ), 297-317 (MLSMYILGLGFVSSAIYTTLI), 334-354 (FILTCGTIGTMLTFVVTGPIV), and 363-383 (LATANGLYLVVFVMCVLLGFV).

This sequence belongs to the major facilitator superfamily. TsgA family.

The protein resides in the cell inner membrane. In Edwardsiella ictaluri (strain 93-146), this protein is Protein TsgA homolog.